The chain runs to 116 residues: Large ribosomal subunit protein bL17 (116 aa).

The protein belongs to the bacterial ribosomal protein bL17 family. As to quaternary structure, part of the 50S ribosomal subunit. Contacts protein L32.

This Synechococcus sp. (strain JA-3-3Ab) (Cyanobacteria bacterium Yellowstone A-Prime) protein is Large ribosomal subunit protein bL17.